The sequence spans 744 residues: Kinesin-like protein KIF2A (744 aa).

Positions 66–186 (LVPDEEIEPS…QQELREKRAQ (121 aa)) are disordered. A Phosphoserine modification is found at Ser75. 2 positions are modified to phosphothreonine: Thr78 and Thr97. Residue Ser100 is modified to Phosphoserine. The residue at position 102 (Lys102) is an N6-acetyllysine. The segment covering 123 to 140 (FPEQSSSAQQNGSVSDIS) has biased composition (polar residues). Phosphoserine is present on residues Ser135 and Ser140. Residues 154–187 (RRKSNCVKEVEKLQEKREKRRLQQQELREKRAQD) are a coiled coil. Basic and acidic residues predominate over residues 159 to 186 (CVKEVEKLQEKREKRRLQQQELREKRAQ). In terms of domain architecture, Kinesin motor spans 223-553 (RICVCVRKRP…LRYANRVKEF (331 aa)). Position 313–320 (313–320 (GQTGSGKT)) interacts with ATP. A coiled-coil region spans residues 698 to 737 (ATQLEAILEQKIDILTELRDKVKSFRAALQEEEQASKQIN).

The protein belongs to the TRAFAC class myosin-kinesin ATPase superfamily. Kinesin family. MCAK/KIF2 subfamily. Interacts with AURKA and PLK1. Interacts with PSRC1. Interacts with MCRS1; the interaction enhances recruitment of KIF2A to the minus ends of spindle microtubules which promotes chromosome alignment.

Its subcellular location is the cytoplasm. It is found in the cytoskeleton. The protein localises to the microtubule organizing center. The protein resides in the centrosome. It localises to the spindle pole. Its subcellular location is the spindle. Its function is as follows. Plus end-directed microtubule-dependent motor required for normal brain development. May regulate microtubule dynamics during axonal growth. Required for normal progression through mitosis. Required for normal congress of chromosomes at the metaphase plate. Required for normal spindle dynamics during mitosis. Promotes spindle turnover. Implicated in formation of bipolar mitotic spindles. Has microtubule depolymerization activity. The chain is Kinesin-like protein KIF2A from Pongo abelii (Sumatran orangutan).